The chain runs to 184 residues: MKNLTDSFVYLGHWPSAGSFGFNTDILATNPINLSVVFGVLIFFGKGVLNDLLDNRKQRILNTIRNSEELREGAIQQLENARARLRNVETEADKFRVNGYSEIEREKLNLINSTYKTLKQLENYKNETILFEQQRTINQVRERVFQQALQGAIGTLNSCLSNELHLRTINANIGMFGTMKEITD.

A helical transmembrane segment spans residues 27 to 49; it reads LATNPINLSVVFGVLIFFGKGVL.

This sequence belongs to the ATPase B chain family. As to quaternary structure, F-type ATPases have 2 components, F(1) - the catalytic core - and F(0) - the membrane proton channel. F(1) has five subunits: alpha(3), beta(3), gamma(1), delta(1), epsilon(1). F(0) has four main subunits: a(1), b(1), b'(1) and c(10-14). The alpha and beta chains form an alternating ring which encloses part of the gamma chain. F(1) is attached to F(0) by a central stalk formed by the gamma and epsilon chains, while a peripheral stalk is formed by the delta, b and b' chains.

Its subcellular location is the plastid. The protein localises to the chloroplast thylakoid membrane. F(1)F(0) ATP synthase produces ATP from ADP in the presence of a proton or sodium gradient. F-type ATPases consist of two structural domains, F(1) containing the extramembraneous catalytic core and F(0) containing the membrane proton channel, linked together by a central stalk and a peripheral stalk. During catalysis, ATP synthesis in the catalytic domain of F(1) is coupled via a rotary mechanism of the central stalk subunits to proton translocation. Functionally, component of the F(0) channel, it forms part of the peripheral stalk, linking F(1) to F(0). The polypeptide is ATP synthase subunit b, chloroplastic (Arabidopsis thaliana (Mouse-ear cress)).